Reading from the N-terminus, the 97-residue chain is UPF0235 protein LHK_03181 (97 aa).

Belongs to the UPF0235 family.

The protein is UPF0235 protein LHK_03181 of Laribacter hongkongensis (strain HLHK9).